Here is a 205-residue protein sequence, read N- to C-terminus: Small ribosomal subunit protein uS4 (205 aa).

Residues 26–46 (PVNRREYGPGQHGQRRKQKPS) form a disordered region. The S4 RNA-binding domain occupies 94 to 157 (RRLDAVVYRL…KQLAIVLDAV (64 aa)).

The protein belongs to the universal ribosomal protein uS4 family. As to quaternary structure, part of the 30S ribosomal subunit. Contacts protein S5. The interaction surface between S4 and S5 is involved in control of translational fidelity.

Its function is as follows. One of the primary rRNA binding proteins, it binds directly to 16S rRNA where it nucleates assembly of the body of the 30S subunit. Functionally, with S5 and S12 plays an important role in translational accuracy. The sequence is that of Small ribosomal subunit protein uS4 from Gluconobacter oxydans (strain 621H) (Gluconobacter suboxydans).